A 35-amino-acid chain; its full sequence is Peptide Hact-3 (35 aa).

Expressed in tentacles.

Its subcellular location is the nematocyst. The protein localises to the secreted. Functionally, peptide with unknown function. Does not exhibit antimicrobial activity against Escherichia coli and Staphylococcus aureus. The protein is Peptide Hact-3 of Heliofungia actiniformis (Mushroom coral).